Here is a 238-residue protein sequence, read N- to C-terminus: Accessory gene regulator protein A (238 aa).

Residues 2–125 (KIFVCEDDQR…LKMRIIDCLE (124 aa)) enclose the Response regulatory domain. The residue at position 59 (Asp59) is a 4-aspartylphosphate. Residues 143 to 238 (IELKRGSNSV…FASVRNVKKI (96 aa)) form the HTH LytTR-type domain.

The protein resides in the cytoplasm. Functionally, required for high-level post-exponential phase expression of a series of secreted proteins. The sequence is that of Accessory gene regulator protein A (agrA) from Staphylococcus epidermidis (strain ATCC 35984 / DSM 28319 / BCRC 17069 / CCUG 31568 / BM 3577 / RP62A).